The primary structure comprises 100 residues: NADH-quinone oxidoreductase subunit K (100 aa).

Transmembrane regions (helical) follow at residues 4 to 24 (LSHAFSLSIILFILGLIAIIV), 29 to 49 (LFILLGLEIMINAAASAFVIV), and 60 to 80 (IMYILVITLSASESAVSLALL).

Belongs to the complex I subunit 4L family. In terms of assembly, NDH-1 is composed of 13 different subunits. Subunits NuoA, H, J, K, L, M, N constitute the membrane sector of the complex.

It localises to the cell inner membrane. The catalysed reaction is a quinone + NADH + 5 H(+)(in) = a quinol + NAD(+) + 4 H(+)(out). Its function is as follows. NDH-1 shuttles electrons from NADH, via FMN and iron-sulfur (Fe-S) centers, to quinones in the respiratory chain. The immediate electron acceptor for the enzyme in this species is believed to be ubiquinone. Couples the redox reaction to proton translocation (for every two electrons transferred, four hydrogen ions are translocated across the cytoplasmic membrane), and thus conserves the redox energy in a proton gradient. In Blochmanniella pennsylvanica (strain BPEN), this protein is NADH-quinone oxidoreductase subunit K.